We begin with the raw amino-acid sequence, 258 residues long: Alcohol dehydrogenase 2 (258 aa).

Residue 9–33 participates in NAD(+) binding; that stretch reads IFVGGLGFIGYEACKQLMAKNMASF. Serine 137 serves as a coordination point for substrate. Tyrosine 150 (proton acceptor) is an active-site residue.

It belongs to the short-chain dehydrogenases/reductases (SDR) family. Homodimer.

It carries out the reaction a primary alcohol + NAD(+) = an aldehyde + NADH + H(+). The enzyme catalyses a secondary alcohol + NAD(+) = a ketone + NADH + H(+). The protein is Alcohol dehydrogenase 2 (ADH2) of Ceratitis rosa (Natal fruit fly).